Here is a 358-residue protein sequence, read N- to C-terminus: Glutamate--cysteine ligase (358 aa).

It belongs to the glutamate--cysteine ligase type 2 family. YbdK subfamily.

The catalysed reaction is L-cysteine + L-glutamate + ATP = gamma-L-glutamyl-L-cysteine + ADP + phosphate + H(+). Catalyzes the synthesis of gamma-glutamylcysteine (gamma-GC), the main low-molecular-weight thiol compound instead of glutathione in halophilic archaea. This chain is Glutamate--cysteine ligase, found in Haloferax volcanii (strain ATCC 29605 / DSM 3757 / JCM 8879 / NBRC 14742 / NCIMB 2012 / VKM B-1768 / DS2) (Halobacterium volcanii).